We begin with the raw amino-acid sequence, 91 residues long: Small ribosomal subunit protein bS6 (91 aa).

Belongs to the bacterial ribosomal protein bS6 family.

In terms of biological role, binds together with bS18 to 16S ribosomal RNA. The chain is Small ribosomal subunit protein bS6 from Leptospira interrogans serogroup Icterohaemorrhagiae serovar copenhageni (strain Fiocruz L1-130).